A 204-amino-acid polypeptide reads, in one-letter code: Inner membrane protein YagU (204 aa).

Over 1-14 (MNIFEQTPPNRRRY) the chain is Periplasmic. A helical membrane pass occupies residues 15–35 (GLAAFIGLIAGVVSAFVKWGA). Topologically, residues 36-100 (EVPLPPRSPV…VYTFAGHVFN (65 aa)) are cytoplasmic. The chain crosses the membrane as a helical span at residues 101–121 (WVGVTHIIFSIVFAVGYCVVA). Topologically, residues 122–132 (EVFPKIKLWQG) are periplasmic. Residues 133–153 (LLAGALAQLFVHMISFPLMGL) traverse the membrane as a helical segment. Topologically, residues 154–204 (TPPLFDLPWYENVSEIFGHLVWFWSIEIIRRDLRNRITHEPDPEIPLGSNR) are cytoplasmic.

In terms of assembly, homodimer.

The protein localises to the cell inner membrane. This chain is Inner membrane protein YagU (yagU), found in Escherichia coli (strain K12).